The primary structure comprises 204 residues: Ribonuclease HII (204 aa).

The RNase H type-2 domain occupies 1 to 197; it reads MILGIDEAGR…KNRILNPKLL (197 aa). Residues Asp-6, Glu-7, and Asp-103 each coordinate a divalent metal cation.

Belongs to the RNase HII family. The cofactor is Mn(2+). Mg(2+) is required as a cofactor.

Its subcellular location is the cytoplasm. The enzyme catalyses Endonucleolytic cleavage to 5'-phosphomonoester.. In terms of biological role, endonuclease that specifically degrades the RNA of RNA-DNA hybrids. This chain is Ribonuclease HII, found in Helicobacter pylori (strain G27).